The primary structure comprises 311 residues: MSESNVKHLISWEDWSDSEILDLLDFAIHVKKNRVNYAGHMSGRSLAMLFQKTSTRTRVSFEVAMTEMGGHGIYLDWMASNFQLSDIDLEARYLSRNVSVIMARLKKHEDLLTMRNGSQVPLINGCDNMFHPCQSLADIMTIALDKPEIPLNQIQLTYIGVHNNVVNSLIGITSALGIRLTLVTPIAEKENIHSQTVERAKAKGTLSWEENLKKAIQNADYVYTDTWLDMEFFNDPSYADKKKQRMELMMPYQINSSLLEKTNAKVMHDMPIHAGYEITREVVLGPRSIIFQQAENRLDAQKAVILKLLEA.

Carbamoyl phosphate is bound by residues 54 to 58 (STRTR), Asn81, Arg104, and 131 to 134 (HPCQ). L-ornithine is bound by residues Asn164, Asp225, and 229-230 (DM). Residues 268-271 (HDMP), Thr279, and Arg297 each bind carbamoyl phosphate.

Belongs to the aspartate/ornithine carbamoyltransferase superfamily. OTCase family.

Its subcellular location is the cytoplasm. The enzyme catalyses carbamoyl phosphate + L-ornithine = L-citrulline + phosphate + H(+). It participates in amino-acid biosynthesis; L-arginine biosynthesis; L-arginine from L-ornithine and carbamoyl phosphate: step 1/3. Functionally, reversibly catalyzes the transfer of the carbamoyl group from carbamoyl phosphate (CP) to the N(epsilon) atom of ornithine (ORN) to produce L-citrulline. This is Ornithine carbamoyltransferase (argF) from Leptospira interrogans serogroup Icterohaemorrhagiae serovar copenhageni (strain Fiocruz L1-130).